A 133-amino-acid chain; its full sequence is Small ribosomal subunit protein uS8 (133 aa).

This sequence belongs to the universal ribosomal protein uS8 family. As to quaternary structure, part of the 30S ribosomal subunit.

One of the primary rRNA binding proteins, it binds directly to 16S rRNA central domain where it helps coordinate assembly of the platform of the 30S subunit. This chain is Small ribosomal subunit protein uS8, found in Ignicoccus hospitalis (strain KIN4/I / DSM 18386 / JCM 14125).